A 340-amino-acid chain; its full sequence is Chitinase 7 (340 aa).

The first 32 residues, Met-1–Ala-32, serve as a signal peptide directing secretion. Residues Glu-33 to Val-73 enclose the Chitin-binding type-1 domain. Cystine bridges form between Cys-35–Cys-50, Cys-44–Cys-56, Cys-49–Cys-63, Cys-67–Cys-71, Cys-118–Cys-173, Cys-185–Cys-193, and Cys-293–Cys-323.

It belongs to the glycosyl hydrolase 19 family. Chitinase class I subfamily. Expressed in pistils, stamens and lodicules.

The enzyme catalyses Random endo-hydrolysis of N-acetyl-beta-D-glucosaminide (1-&gt;4)-beta-linkages in chitin and chitodextrins.. Functionally, hydrolyzes chitin and may play a role in defense against fungal pathogens containing chitin. This Oryza sativa subsp. japonica (Rice) protein is Chitinase 7 (Cht7).